Consider the following 904-residue polypeptide: DNA mismatch repair protein MutS (904 aa).

ATP is bound at residue 638–645 (GPNMAGKS). The tract at residues 825–869 (KSKADGTRRPASYHEAQPLLPGMPEPPSTASAEPPQTVTPPEPPV) is disordered.

It belongs to the DNA mismatch repair MutS family.

This protein is involved in the repair of mismatches in DNA. It is possible that it carries out the mismatch recognition step. This protein has a weak ATPase activity. The sequence is that of DNA mismatch repair protein MutS from Oleidesulfovibrio alaskensis (strain ATCC BAA-1058 / DSM 17464 / G20) (Desulfovibrio alaskensis).